The primary structure comprises 160 residues: MSRFRIGNGYDIHRLVEGRPLILGGIQLEHSLGLDGHSDADVLTHAIMDALLGALSLGDIGHYFPPTDPQWKGADSLKLLAQVNQLIRDRGWTIGNLDSVVVAEQPKLKPHIAAMRDRLAKVLELEPDQIGIKATTNEKLGPTGREEGICAYAVALLVRD.

A divalent metal cation-binding residues include Asp-11 and His-13. 4-CDP-2-C-methyl-D-erythritol 2-phosphate is bound by residues 11–13 (DIH) and 37–38 (HS). His-45 contributes to the a divalent metal cation binding site. Residues 59–61 (DIG), 135–138 (TTNE), and Arg-145 each bind 4-CDP-2-C-methyl-D-erythritol 2-phosphate.

Belongs to the IspF family. In terms of assembly, homotrimer. It depends on a divalent metal cation as a cofactor.

The enzyme catalyses 4-CDP-2-C-methyl-D-erythritol 2-phosphate = 2-C-methyl-D-erythritol 2,4-cyclic diphosphate + CMP. The protein operates within isoprenoid biosynthesis; isopentenyl diphosphate biosynthesis via DXP pathway; isopentenyl diphosphate from 1-deoxy-D-xylulose 5-phosphate: step 4/6. Its function is as follows. Involved in the biosynthesis of isopentenyl diphosphate (IPP) and dimethylallyl diphosphate (DMAPP), two major building blocks of isoprenoid compounds. Catalyzes the conversion of 4-diphosphocytidyl-2-C-methyl-D-erythritol 2-phosphate (CDP-ME2P) to 2-C-methyl-D-erythritol 2,4-cyclodiphosphate (ME-CPP) with a corresponding release of cytidine 5-monophosphate (CMP). The protein is 2-C-methyl-D-erythritol 2,4-cyclodiphosphate synthase of Synechococcus elongatus (strain ATCC 33912 / PCC 7942 / FACHB-805) (Anacystis nidulans R2).